A 360-amino-acid chain; its full sequence is Phospho-N-acetylmuramoyl-pentapeptide-transferase (360 aa).

10 consecutive transmembrane segments (helical) span residues 18–38 (VFSYLTFRAIVSLLTALFLSL), 72–92 (PTMGGIMILTSITVSVLMWAY), 94–114 (SNPYVWCVLFVLVGYGIVGFV), 132–152 (WKYFWQSVIALVVAFAMYAVG), 168–188 (IMPQLGLLYVLLAYFVIVGTS), 199–219 (GLAIMPTVFVAAGFALVAWAT), 236–256 (AGELVIVCTAIVGAGLGFLWF), 263–283 (VFMGDVGSLALGGALGTIAVL), 288–308 (FLLLIMGGVFVVETLSVILQV), and 338–358 (VIVRFWIISLMLVLIGLATLK).

The protein belongs to the glycosyltransferase 4 family. MraY subfamily. Mg(2+) is required as a cofactor.

The protein localises to the cell inner membrane. The catalysed reaction is UDP-N-acetyl-alpha-D-muramoyl-L-alanyl-gamma-D-glutamyl-meso-2,6-diaminopimeloyl-D-alanyl-D-alanine + di-trans,octa-cis-undecaprenyl phosphate = di-trans,octa-cis-undecaprenyl diphospho-N-acetyl-alpha-D-muramoyl-L-alanyl-D-glutamyl-meso-2,6-diaminopimeloyl-D-alanyl-D-alanine + UMP. It functions in the pathway cell wall biogenesis; peptidoglycan biosynthesis. Its function is as follows. Catalyzes the initial step of the lipid cycle reactions in the biosynthesis of the cell wall peptidoglycan: transfers peptidoglycan precursor phospho-MurNAc-pentapeptide from UDP-MurNAc-pentapeptide onto the lipid carrier undecaprenyl phosphate, yielding undecaprenyl-pyrophosphoryl-MurNAc-pentapeptide, known as lipid I. The chain is Phospho-N-acetylmuramoyl-pentapeptide-transferase from Serratia proteamaculans (strain 568).